Consider the following 717-residue polypeptide: MEPLHAGAAGSSRAVCSQGPPTQISSSRVIVHVDLDCFYAQVEMISNPELKDRPLGVQQKYLVVTCNYEARKLGVRKLMNVRDAKEKCPQLVLVNGEDLSRYREMSYKVTELLEEFSPAVERLGFDENFVDLTEMVEKRLQQLPSEEVPSVTVFGHVYNNQSVNLHNIMHRRLVVGSQIAAEMREAMYNQLGLTGCAGVAPNKLLAKLVSGVFKPNQQTVLLPESCQHLIHSLNHIKEIPGIGYKTAKRLEVLGINSVHDLQTFPIKTLEKELGIAIAQRIQQLSFGEDKSPVTPSGPPQSFSEEDTFKKCSSEVEAKAKIEELLSSLLTRVCQDGRKPHTVRLVIRRYSDKHCNRESRQCPIPSHVIQKLGTGNHDSMPPLIDILMKLFRNMVNVKMPFHLTLMSVCFCNLKALSSAKKGPMDCYLTSLSTPAYTDKRAFKVKDTHTEDSHKEKEANWDCLPSRRIESTGTGESPLDATCFPKEKDTSDLPLQALPEGVDQEVFKQLPADIQEEILYGKSRENLKGKGSLSCPLHASRGVLSFFSTKQMQASRLSPRDTALPSKRVSAASPCEPGTSGLSPGSTSHPSCGKDCSYYIDSQLKDEQTSQGPTESQGCQFSSTNPAVSGFHSFPNLQTEQLFSTHRTVDSHKQTATASHQGLESHQGLESRELDSAEEKLPFPPDIDPQVFYELPEEVQKELMAEWERAGAARPSAHR.

The interval 1 to 22 is disordered; that stretch reads MEPLHAGAAGSSRAVCSQGPPT. The 214-residue stretch at 30-243 folds into the UmuC domain; it reads IVHVDLDCFY…NHIKEIPGIG (214 aa). Mg(2+) is bound by residues Asp-34 and Leu-35. A 2'-deoxyribonucleoside 5'-triphosphate is bound by residues Tyr-39 and Arg-71. Asp-126 serves as a coordination point for Mg(2+). The active-site Proton acceptor is the Glu-127. DNA-binding regions lie at residues 300 to 307 and 343 to 360; these read QSFSEEDT and RLVIRRYSDKHCNRESRQ. Residues 500-517 carry the Ubiquitin-binding 1 (UBM1) motif; it reads VDQEVFKQLPADIQEEIL. 3 disordered regions span residues 549 to 589, 603 to 622, and 644 to 687; these read QMQA…SHPS, KDEQTSQGPTESQGCQFSST, and HRTV…DIDP. A compositionally biased stretch (low complexity) spans 575–589; it reads PGTSGLSPGSTSHPS. Polar residues-rich tracts occupy residues 607-622 and 652-662; these read TSQGPTESQGCQFSST and QTATASHQGLE. Over residues 665–679 the composition is skewed to basic and acidic residues; it reads QGLESRELDSAEEKL. Residues 685 to 702 carry the Ubiquitin-binding 2 (UBM2) motif; it reads IDPQVFYELPEEVQKELM.

This sequence belongs to the DNA polymerase type-Y family. In terms of assembly, interacts with POLH. Interacts with REV1. Interacts with ubiquitin. It depends on Mg(2+) as a cofactor. Mn(2+) is required as a cofactor. Post-translationally, monoubiquitinated. Protein monoubiquitination prevents POLI binding to ubiquitin via the ubiquitin-binding motif 1 and ubiquitin-binding motif 2. As to expression, detected in testis, and at very low levels in spleen, lung and brain. Detected in round spermatids, but not in prophase spermatocytes.

The protein localises to the nucleus. The catalysed reaction is DNA(n) + a 2'-deoxyribonucleoside 5'-triphosphate = DNA(n+1) + diphosphate. Its function is as follows. Error-prone DNA polymerase specifically involved in DNA repair. Plays an important role in translesion synthesis, where the normal high-fidelity DNA polymerases cannot proceed and DNA synthesis stalls. Favors Hoogsteen base-pairing in the active site. Inserts the correct base with high-fidelity opposite an adenosine template. Exhibits low fidelity and efficiency opposite a thymidine template, where it will preferentially insert guanosine. May play a role in hypermutation of immunoglobulin genes. Forms a Schiff base with 5'-deoxyribose phosphate at abasic sites, but may not have lyase activity. The protein is DNA polymerase iota (Poli) of Mus musculus (Mouse).